The chain runs to 595 residues: Metacaspase-1 (595 aa).

Active-site residues include His411 and Cys466.

It belongs to the peptidase C14B family. Monomer.

With respect to regulation, activated by Ca(2+). Functionally, cysteine protease that cleaves specifically after arginine or lysine residues. This is Metacaspase-1 from Plasmodium berghei (strain Anka).